Consider the following 748-residue polypeptide: Transcription factor FBD3 (748 aa).

The segment covering 1–10 (MPEQPRRPSD) has biased composition (basic and acidic residues). The interval 1 to 26 (MPEQPRRPSDQEQNQSETGPPTNKRR) is disordered. Residues 11 to 21 (QEQNQSETGPP) show a composition bias toward polar residues. Positions 32–59 (CNACRSRKSRCDGQRPSCSSCLSLGFDC) form a DNA-binding region, zn(2)-C6 fungal-type. 2 disordered regions span residues 116–160 (GTIN…EGIP) and 417–438 (IPDE…TSGN). A compositionally biased stretch (low complexity) spans 131 to 141 (APTKASAPSGA). The segment covering 429–438 (SGRSPATSGN) has biased composition (polar residues).

It is found in the nucleus. Functionally, transcription factor; part of the Fusarium detoxification of benzoxazolinone cluster 2 (FDB2) involved in the degradation of benzoxazolinones produced by the host plant. Maize, wheat, and rye produce the 2 benzoxazinone phytoanticipins 2,4-dihy-droxy-7-methoxy-1,4-benzoxazin-3-one (DIMBOA) and 2,4-dihydroxy-1,4-benzoxazin-3-one (DIBOA) that, due to their inherent instability once released, spontaneously degrade to the more stable corresponding benzoxazolinones, 6-methoxy-2-benzoxazolinone (MBOA) and 2-benzoxazolinone (BOA), respectively. FDB3 is not essentiel, but contributes to efficient BOA biotransformation. This Gibberella moniliformis (strain M3125 / FGSC 7600) (Maize ear and stalk rot fungus) protein is Transcription factor FBD3.